Reading from the N-terminus, the 101-residue chain is Protein Tat (101 aa).

Residues 1–24 (MEPVDPSLDPWNHPGSQPTTPCTK) form an interaction with human CREBBP region. Residues 1-48 (MEPVDPSLDPWNHPGSQPTTPCTKCYCKRCCFHCQWCFTTKGLGISYG) are transactivation. 3 residues coordinate Zn(2+): Cys22, Cys25, and Cys27. A cysteine-rich region spans residues 22-37 (CTKCYCKRCCFHCQWC). Lys28 carries the post-translational modification N6-acetyllysine; by host PCAF. Positions 30, 33, 34, and 37 each coordinate Zn(2+). Residues 38–48 (FTTKGLGISYG) are core. A compositionally biased stretch (basic residues) spans 48 to 58 (GRKKRRQRHRT). Residues 48–101 (GRKKRRQRHRTPQSSQVHQNSLPKQPLSQARGDPTGPKESKKEVESKAKTDPCA) are disordered. A Nuclear localization signal, RNA-binding (TAR), and protein transduction motif is present at residues 49 to 57 (RKKRRQRHR). Residues 49–86 (RKKRRQRHRTPQSSQVHQNSLPKQPLSQARGDPTGPKE) form an interaction with the host capping enzyme RNGTT region. An N6-acetyllysine; by host EP300 and GCN5L2 mark is found at Lys50 and Lys51. An asymmetric dimethylarginine; by host PRMT6 mark is found at Arg52 and Arg53. A compositionally biased stretch (polar residues) spans 59-75 (PQSSQVHQNSLPKQPLS). Lys71 is covalently cross-linked (Glycyl lysine isopeptide (Lys-Gly) (interchain with G-Cter in ubiquitin)). The Cell attachment site signature appears at 78–80 (RGD). The span at 83 to 101 (GPKESKKEVESKAKTDPCA) shows a compositional bias: basic and acidic residues.

This sequence belongs to the lentiviruses Tat family. As to quaternary structure, interacts with host CCNT1. Associates with the P-TEFb complex composed at least of Tat, P-TEFb (CDK9 and CCNT1), TAR RNA, RNA Pol II. Recruits the HATs CREBBP, TAF1/TFIID, EP300, PCAF and GCN5L2. Interacts with host KAT5/Tip60; this interaction targets the latter to degradation. Interacts with the host deacetylase SIRT1. Interacts with host capping enzyme RNGTT; this interaction stimulates RNGTT. Binds to host KDR, and to the host integrins ITGAV/ITGB3 and ITGA5/ITGB1. Interacts with host KPNB1/importin beta-1 without previous binding to KPNA1/importin alpha-1. Interacts with EIF2AK2. Interacts with host nucleosome assembly protein NAP1L1; this interaction may be required for the transport of Tat within the nucleus, since the two proteins interact at the nuclear rim. Interacts with host C1QBP/SF2P32; this interaction involves lysine-acetylated Tat. Interacts with the host chemokine receptors CCR2, CCR3 and CXCR4. Interacts with host DPP4/CD26; this interaction may trigger an anti-proliferative effect. Interacts with host LDLR. Interacts with the host extracellular matrix metalloproteinase MMP1. Interacts with host PRMT6; this interaction mediates Tat's methylation. Interacts with, and is ubiquitinated by MDM2/Hdm2. Interacts with host PSMC3 and HTATIP2. Interacts with STAB1; this interaction may overcome SATB1-mediated repression of IL2 and IL2RA (interleukin) in T cells by binding to the same domain than HDAC1. Interacts (when acetylated) with human CDK13, thereby increasing HIV-1 mRNA splicing and promoting the production of the doubly spliced HIV-1 protein Nef. Interacts with host TBP; this interaction modulates the activity of transcriptional pre-initiation complex. Interacts with host RELA. Interacts with host PLSCR1; this interaction negatively regulates Tat transactivation activity by altering its subcellular distribution. Post-translationally, asymmetrical arginine methylation by host PRMT6 seems to diminish the transactivation capacity of Tat and affects the interaction with host CCNT1. In terms of processing, acetylation by EP300, CREBBP, GCN5L2/GCN5 and PCAF regulates the transactivation activity of Tat. EP300-mediated acetylation of Lys-50 promotes dissociation of Tat from the TAR RNA through the competitive binding to PCAF's bromodomain. In addition, the non-acetylated Tat's N-terminus can also interact with PCAF. PCAF-mediated acetylation of Lys-28 enhances Tat's binding to CCNT1. Lys-50 is deacetylated by SIRT1. Polyubiquitination by host MDM2 does not target Tat to degradation, but activates its transactivation function and fosters interaction with CCNT1 and TAR RNA. Post-translationally, phosphorylated by EIF2AK2 on serine and threonine residues adjacent to the basic region important for TAR RNA binding and function. Phosphorylation of Tat by EIF2AK2 is dependent on the prior activation of EIF2AK2 by dsRNA.

The protein resides in the host nucleus. It is found in the host nucleolus. It localises to the host cytoplasm. The protein localises to the secreted. Its function is as follows. Transcriptional activator that increases RNA Pol II processivity, thereby increasing the level of full-length viral transcripts. Recognizes a hairpin structure at the 5'-LTR of the nascent viral mRNAs referred to as the transactivation responsive RNA element (TAR) and recruits the cyclin T1-CDK9 complex (P-TEFb complex) that will in turn hyperphosphorylate the RNA polymerase II to allow efficient elongation. The CDK9 component of P-TEFb and other Tat-activated kinases hyperphosphorylate the C-terminus of RNA Pol II that becomes stabilized and much more processive. Other factors such as HTATSF1/Tat-SF1, SUPT5H/SPT5, and HTATIP2 are also important for Tat's function. Besides its effect on RNA Pol II processivity, Tat induces chromatin remodeling of proviral genes by recruiting the histone acetyltransferases (HATs) CREBBP, EP300 and PCAF to the chromatin. This also contributes to the increase in proviral transcription rate, especially when the provirus integrates in transcriptionally silent region of the host genome. To ensure maximal activation of the LTR, Tat mediates nuclear translocation of NF-kappa-B by interacting with host RELA. Through its interaction with host TBP, Tat may also modulate transcription initiation. Tat can reactivate a latently infected cell by penetrating in it and transactivating its LTR promoter. In the cytoplasm, Tat is thought to act as a translational activator of HIV-1 mRNAs. In terms of biological role, extracellular circulating Tat can be endocytosed by surrounding uninfected cells via the binding to several surface receptors such as CD26, CXCR4, heparan sulfate proteoglycans (HSPG) or LDLR. Neurons are rarely infected, but they internalize Tat via their LDLR. Through its interaction with nuclear HATs, Tat is potentially able to control the acetylation-dependent cellular gene expression. Modulates the expression of many cellular genes involved in cell survival, proliferation or in coding for cytokines or cytokine receptors. Tat plays a role in T-cell and neurons apoptosis. Tat induced neurotoxicity and apoptosis probably contribute to neuroAIDS. Circulating Tat also acts as a chemokine-like and/or growth factor-like molecule that binds to specific receptors on the surface of the cells, affecting many cellular pathways. In the vascular system, Tat binds to ITGAV/ITGB3 and ITGA5/ITGB1 integrins dimers at the surface of endothelial cells and competes with bFGF for heparin-binding sites, leading to an excess of soluble bFGF. The sequence is that of Protein Tat from Human immunodeficiency virus type 1 group M subtype F1 (isolate VI850) (HIV-1).